We begin with the raw amino-acid sequence, 180 residues long: Pro-glucagon (180 aa).

Positions 1 to 20 are cleaved as a signal peptide; the sequence is MKSIYFVAGLFVMLVQGSWQ. The disordered stretch occupies residues 26-59; sequence TEEKSRSFSASQADPLSDPDQMNEDKRHSQGTFT. A Phosphoserine modification is found at S54. The propeptide occupies 84–89; that stretch reads NRNNIA. A phosphoserine mark is found at S105 and S108. Position 127 is an arginine amide (R127). Residues 131–145 constitute a propeptide that is removed on maturation; sequence DFPEEVAIVEELGRR. S150 and S152 each carry phosphoserine.

Belongs to the glucagon family. Proglucagon is post-translationally processed in a tissue-specific manner in pancreatic A cells and intestinal L cells. In pancreatic A cells, the major bioactive hormone is glucagon cleaved by PCSK2/PC2. In the intestinal L cells PCSK1/PC1 liberates GLP-1, GLP-2, glicentin and oxyntomodulin. GLP-1 is further N-terminally truncated by post-translational processing in the intestinal L cells resulting in GLP-1(7-37) GLP-1-(7-36)amide. The C-terminal amidation is neither important for the metabolism of GLP-1 nor for its effects on the endocrine pancreas. In terms of tissue distribution, secreted in the A cells of the islets of Langerhans. Secreted in the A cells of the islets of Langerhans. Secreted from enteroendocrine L cells throughout the gastrointestinal tract. Also secreted in selected neurons in the brain. As to expression, secreted from enteroendocrine cells throughout the gastrointestinal tract. Also secreted in selected neurons in the brain. In terms of tissue distribution, secreted from enteroendocrine cells throughout the gastrointestinal tract.

It localises to the secreted. Its function is as follows. Plays a key role in glucose metabolism and homeostasis. Regulates blood glucose by increasing gluconeogenesis and decreasing glycolysis. A counterregulatory hormone of insulin, raises plasma glucose levels in response to insulin-induced hypoglycemia. Plays an important role in initiating and maintaining hyperglycemic conditions in diabetes. Potent stimulator of glucose-dependent insulin release. Also stimulates insulin release in response to IL6. Plays important roles on gastric motility and the suppression of plasma glucagon levels. May be involved in the suppression of satiety and stimulation of glucose disposal in peripheral tissues, independent of the actions of insulin. Has growth-promoting activities on intestinal epithelium. May also regulate the hypothalamic pituitary axis (HPA) via effects on LH, TSH, CRH, oxytocin, and vasopressin secretion. Increases islet mass through stimulation of islet neogenesis and pancreatic beta cell proliferation. Inhibits beta cell apoptosis. In terms of biological role, stimulates intestinal growth and up-regulates villus height in the small intestine, concomitant with increased crypt cell proliferation and decreased enterocyte apoptosis. The gastrointestinal tract, from the stomach to the colon is the principal target for GLP-2 action. Plays a key role in nutrient homeostasis, enhancing nutrient assimilation through enhanced gastrointestinal function, as well as increasing nutrient disposal. Stimulates intestinal glucose transport and decreases mucosal permeability. Functionally, significantly reduces food intake. Inhibits gastric emptying in humans. Suppression of gastric emptying may lead to increased gastric distension, which may contribute to satiety by causing a sensation of fullness. Its function is as follows. May modulate gastric acid secretion and the gastro-pyloro-duodenal activity. May play an important role in intestinal mucosal growth in the early period of life. The sequence is that of Pro-glucagon from Homo sapiens (Human).